Consider the following 373-residue polypeptide: Dual-specificity RNA methyltransferase RlmN (373 aa).

The active-site Proton acceptor is the Glu94. Residues Glu100 to Asp339 enclose the Radical SAM core domain. Cys107 and Cys344 are disulfide-bonded. [4Fe-4S] cluster-binding residues include Cys114, Cys118, and Cys121. S-adenosyl-L-methionine-binding positions include Gly168–Glu169, Ser200, Ser222–His224, and Asn301. The active-site S-methylcysteine intermediate is Cys344.

It belongs to the radical SAM superfamily. RlmN family. Requires [4Fe-4S] cluster as cofactor.

The protein localises to the cytoplasm. It catalyses the reaction adenosine(2503) in 23S rRNA + 2 reduced [2Fe-2S]-[ferredoxin] + 2 S-adenosyl-L-methionine = 2-methyladenosine(2503) in 23S rRNA + 5'-deoxyadenosine + L-methionine + 2 oxidized [2Fe-2S]-[ferredoxin] + S-adenosyl-L-homocysteine. The catalysed reaction is adenosine(37) in tRNA + 2 reduced [2Fe-2S]-[ferredoxin] + 2 S-adenosyl-L-methionine = 2-methyladenosine(37) in tRNA + 5'-deoxyadenosine + L-methionine + 2 oxidized [2Fe-2S]-[ferredoxin] + S-adenosyl-L-homocysteine. Functionally, specifically methylates position 2 of adenine 2503 in 23S rRNA and position 2 of adenine 37 in tRNAs. m2A2503 modification seems to play a crucial role in the proofreading step occurring at the peptidyl transferase center and thus would serve to optimize ribosomal fidelity. The chain is Dual-specificity RNA methyltransferase RlmN from Shewanella pealeana (strain ATCC 700345 / ANG-SQ1).